Here is a 179-residue protein sequence, read N- to C-terminus: Large ribosomal subunit protein uL5 (179 aa).

Belongs to the universal ribosomal protein uL5 family. As to quaternary structure, part of the 50S ribosomal subunit; part of the 5S rRNA/L5/L18/L25 subcomplex. Contacts the 5S rRNA and the P site tRNA. Forms a bridge to the 30S subunit in the 70S ribosome.

Its function is as follows. This is one of the proteins that bind and probably mediate the attachment of the 5S RNA into the large ribosomal subunit, where it forms part of the central protuberance. In the 70S ribosome it contacts protein S13 of the 30S subunit (bridge B1b), connecting the 2 subunits; this bridge is implicated in subunit movement. Contacts the P site tRNA; the 5S rRNA and some of its associated proteins might help stabilize positioning of ribosome-bound tRNAs. This is Large ribosomal subunit protein uL5 from Neisseria gonorrhoeae (strain ATCC 700825 / FA 1090).